The sequence spans 307 residues: Ornithine carbamoyltransferase (307 aa).

Carbamoyl phosphate-binding positions include 55–58 (STRT), Gln82, Arg106, and 133–136 (HPCQ). Residues Asn164, Asp224, and 228 to 229 (SM) each bind L-ornithine. Residues 263-264 (CL) and Arg291 each bind carbamoyl phosphate.

This sequence belongs to the aspartate/ornithine carbamoyltransferase superfamily. OTCase family.

The protein localises to the cytoplasm. The catalysed reaction is carbamoyl phosphate + L-ornithine = L-citrulline + phosphate + H(+). It participates in amino-acid biosynthesis; L-arginine biosynthesis; L-arginine from L-ornithine and carbamoyl phosphate: step 1/3. Functionally, reversibly catalyzes the transfer of the carbamoyl group from carbamoyl phosphate (CP) to the N(epsilon) atom of ornithine (ORN) to produce L-citrulline. The protein is Ornithine carbamoyltransferase of Bradyrhizobium diazoefficiens (strain JCM 10833 / BCRC 13528 / IAM 13628 / NBRC 14792 / USDA 110).